The sequence spans 268 residues: Ribosomal RNA small subunit methyltransferase A (268 aa).

The S-adenosyl-L-methionine site is built by N18, L20, G45, E66, D91, and N112.

This sequence belongs to the class I-like SAM-binding methyltransferase superfamily. rRNA adenine N(6)-methyltransferase family. RsmA subfamily.

Its subcellular location is the cytoplasm. It carries out the reaction adenosine(1518)/adenosine(1519) in 16S rRNA + 4 S-adenosyl-L-methionine = N(6)-dimethyladenosine(1518)/N(6)-dimethyladenosine(1519) in 16S rRNA + 4 S-adenosyl-L-homocysteine + 4 H(+). Functionally, specifically dimethylates two adjacent adenosines (A1518 and A1519) in the loop of a conserved hairpin near the 3'-end of 16S rRNA in the 30S particle. May play a critical role in biogenesis of 30S subunits. This chain is Ribosomal RNA small subunit methyltransferase A, found in Shewanella putrefaciens (strain CN-32 / ATCC BAA-453).